A 110-amino-acid polypeptide reads, in one-letter code: Large ribosomal subunit protein uL22 (110 aa).

This sequence belongs to the universal ribosomal protein uL22 family. In terms of assembly, part of the 50S ribosomal subunit.

This protein binds specifically to 23S rRNA; its binding is stimulated by other ribosomal proteins, e.g. L4, L17, and L20. It is important during the early stages of 50S assembly. It makes multiple contacts with different domains of the 23S rRNA in the assembled 50S subunit and ribosome. In terms of biological role, the globular domain of the protein is located near the polypeptide exit tunnel on the outside of the subunit, while an extended beta-hairpin is found that lines the wall of the exit tunnel in the center of the 70S ribosome. The chain is Large ribosomal subunit protein uL22 from Exiguobacterium sibiricum (strain DSM 17290 / CCUG 55495 / CIP 109462 / JCM 13490 / 255-15).